A 1058-amino-acid polypeptide reads, in one-letter code: Carbamoyl phosphate synthase large chain (1058 aa).

The carboxyphosphate synthetic domain stretch occupies residues 1-401; sequence MPKRTDIQKI…SLLKACRSLE (401 aa). ATP is bound by residues Arg129, Arg169, Gly175, Gly176, Arg208, Ile210, Glu215, Gly241, Ile242, His243, Gln284, and Glu298. The 195-residue stretch at 133–327 folds into the ATP-grasp 1 domain; it reads KQLMEELEQP…IAKLAAKIAV (195 aa). Gln284, Glu298, and Asn300 together coordinate Mg(2+). Mn(2+) contacts are provided by Gln284, Glu298, and Asn300. Residues 402–546 are oligomerization domain; the sequence is IGVHHNEIPE…YSTYGWENES (145 aa). A carbamoyl phosphate synthetic domain region spans residues 547-929; the sequence is IRSDKESVLV…ALYKAFEASY (383 aa). The ATP-grasp 2 domain occupies 671–861; the sequence is EQALKELDIP…MAQVATKLIL (191 aa). ATP contacts are provided by Arg707, Ser746, Ile748, Glu752, Gly777, Val778, His779, Ser780, Gln820, and Glu832. Mg(2+)-binding residues include Gln820, Glu832, and Asn834. Gln820, Glu832, and Asn834 together coordinate Mn(2+). Positions 930 to 1058 constitute an MGS-like domain; it reads LHLPTFGNVV…ESRSFVTEAI (129 aa). Positions 930-1058 are allosteric domain; the sequence is LHLPTFGNVV…ESRSFVTEAI (129 aa).

The protein belongs to the CarB family. As to quaternary structure, composed of two chains; the small (or glutamine) chain promotes the hydrolysis of glutamine to ammonia, which is used by the large (or ammonia) chain to synthesize carbamoyl phosphate. Tetramer of heterodimers (alpha,beta)4. Requires Mg(2+) as cofactor. Mn(2+) is required as a cofactor.

It carries out the reaction hydrogencarbonate + L-glutamine + 2 ATP + H2O = carbamoyl phosphate + L-glutamate + 2 ADP + phosphate + 2 H(+). The catalysed reaction is hydrogencarbonate + NH4(+) + 2 ATP = carbamoyl phosphate + 2 ADP + phosphate + 2 H(+). Its pathway is amino-acid biosynthesis; L-arginine biosynthesis; carbamoyl phosphate from bicarbonate: step 1/1. The protein operates within pyrimidine metabolism; UMP biosynthesis via de novo pathway; (S)-dihydroorotate from bicarbonate: step 1/3. In terms of biological role, large subunit of the glutamine-dependent carbamoyl phosphate synthetase (CPSase). CPSase catalyzes the formation of carbamoyl phosphate from the ammonia moiety of glutamine, carbonate, and phosphate donated by ATP, constituting the first step of 2 biosynthetic pathways, one leading to arginine and/or urea and the other to pyrimidine nucleotides. The large subunit (synthetase) binds the substrates ammonia (free or transferred from glutamine from the small subunit), hydrogencarbonate and ATP and carries out an ATP-coupled ligase reaction, activating hydrogencarbonate by forming carboxy phosphate which reacts with ammonia to form carbamoyl phosphate. The sequence is that of Carbamoyl phosphate synthase large chain from Streptococcus pneumoniae (strain P1031).